We begin with the raw amino-acid sequence, 175 residues long: Co-chaperone protein HscB homolog (175 aa).

One can recognise a J domain in the interval 8–80; sequence DFFSLFGLPR…LNRARYLLQL (73 aa).

This sequence belongs to the HscB family. As to quaternary structure, interacts with HscA and stimulates its ATPase activity.

Co-chaperone involved in the maturation of iron-sulfur cluster-containing proteins. Seems to help targeting proteins to be folded toward HscA. The sequence is that of Co-chaperone protein HscB homolog from Chromobacterium violaceum (strain ATCC 12472 / DSM 30191 / JCM 1249 / CCUG 213 / NBRC 12614 / NCIMB 9131 / NCTC 9757 / MK).